Here is a 463-residue protein sequence, read N- to C-terminus: Asparagine--tRNA ligase (463 aa).

It belongs to the class-II aminoacyl-tRNA synthetase family. As to quaternary structure, homodimer.

The protein localises to the cytoplasm. It carries out the reaction tRNA(Asn) + L-asparagine + ATP = L-asparaginyl-tRNA(Asn) + AMP + diphosphate + H(+). The protein is Asparagine--tRNA ligase of Nostoc sp. (strain PCC 7120 / SAG 25.82 / UTEX 2576).